The sequence spans 35 residues: Kappa-theraphotoxin-Tb1a (35 aa).

3 disulfides stabilise this stretch: cysteine 3–cysteine 18, cysteine 10–cysteine 23, and cysteine 17–cysteine 30.

The protein belongs to the neurotoxin 10 (Hwtx-1) family. 59 (Tltx) subfamily. In terms of assembly, monomer. In terms of tissue distribution, expressed by the venom gland.

The protein resides in the secreted. Functionally, blocks Kv4.2/KCND2 voltage-gated potassium channels (IC(50) is 193.0 nM) by shifting the voltage-dependence of channel activation to more depolarized potentials. The toxin is thought to bind to the S3-S4 linker region of the voltage sensor domain. This is Kappa-theraphotoxin-Tb1a from Theraphosa blondi (Goliath birdeating spider).